The chain runs to 197 residues: Anthranilate synthase component 2 (197 aa).

The region spanning 5–197 (KVLVIDNIDS…LIKNFVESEY (193 aa)) is the Glutamine amidotransferase type-1 domain. 55 to 57 (GPK) is a binding site for L-glutamine. Cysteine 80 acts as the Nucleophile; for GATase activity in catalysis. L-glutamine-binding positions include glutamine 84 and 130 to 131 (SL). Catalysis depends on for GATase activity residues histidine 168 and glutamate 170.

As to quaternary structure, heterotetramer consisting of two non-identical subunits: a beta subunit (TrpG) and a large alpha subunit (TrpE).

The catalysed reaction is chorismate + L-glutamine = anthranilate + pyruvate + L-glutamate + H(+). It participates in amino-acid biosynthesis; L-tryptophan biosynthesis; L-tryptophan from chorismate: step 1/5. Part of a heterotetrameric complex that catalyzes the two-step biosynthesis of anthranilate, an intermediate in the biosynthesis of L-tryptophan. In the first step, the glutamine-binding beta subunit (TrpG) of anthranilate synthase (AS) provides the glutamine amidotransferase activity which generates ammonia as a substrate that, along with chorismate, is used in the second step, catalyzed by the large alpha subunit of AS (TrpE) to produce anthranilate. In the absence of TrpG, TrpE can synthesize anthranilate directly from chorismate and high concentrations of ammonia. In Methanocaldococcus jannaschii (strain ATCC 43067 / DSM 2661 / JAL-1 / JCM 10045 / NBRC 100440) (Methanococcus jannaschii), this protein is Anthranilate synthase component 2 (trpG).